Reading from the N-terminus, the 1142-residue chain is Ribonucleoside-diphosphate reductase large subunit (1142 aa).

Residues 1-33 (MANRPAASALAGARSPSERQEPREPEVAPPGGD) form a disordered region. Residues 16–26 (PSERQEPREPE) are compositionally biased toward basic and acidic residues. Positions 55-75 (AYRISDSSFVQCGSNCSMIID) match the RIP homotypic interaction motif (RHIM) motif. The disordered stretch occupies residues 118–322 (SGPSATTSVG…TDPGYPVPLE (205 aa)). Residues 119-132 (GPSATTSVGTQTSG) show a composition bias toward polar residues. The segment covering 141 to 159 (TPEPQGPQAVPPPPPPPFP) has biased composition (pro residues). A compositionally biased stretch (basic and acidic residues) spans 164–179 (CCARRDARGGAEKDVG). A compositionally biased stretch (acidic residues) spans 192–205 (SETEDSDSSDEDTG). Positions 277 to 303 (GSATDPRASADSDSAAHAAAPQADVAP) are enriched in low complexity. The segment at 294–400 (AAAPQADVAP…CLDLPPVPPN (107 aa)) is alpha-crystallin domain. Substrate-binding positions include T571, 586-587 (SC), G617, 796-800 (NLCTE), and 973-977 (PTAAS). C587 and C813 are oxidised to a cystine. N796 functions as the Proton acceptor in the catalytic mechanism. C798 serves as the catalytic Cysteine radical intermediate. E800 serves as the catalytic Proton acceptor.

This sequence belongs to the ribonucleoside diphosphate reductase large chain family. In terms of assembly, heterotetramer composed of a homodimer of the large subunit (R1) and a homodimer of the small subunit (R2). Larger multisubunit protein complex are also active, composed of (R1)n(R2)n. May self-assemble (via RIP homotypic interaction motif/RHIM) into homomeric fibrillar amyloid structures. Interacts (via RHIM) with human RIPK1 (via RHIM). Interacts (via RHIM) with human RIPK3 (via RHIM). May interact (via RHIM) with human ZBP1 (via RHIM). Interacts (via C-terminus) with host CASP8.

The protein resides in the host cell membrane. It localises to the host endosome membrane. It carries out the reaction a 2'-deoxyribonucleoside 5'-diphosphate + [thioredoxin]-disulfide + H2O = a ribonucleoside 5'-diphosphate + [thioredoxin]-dithiol. Functionally, ribonucleoside-diphosphate reductase holoenzyme that provides the precursors necessary for viral DNA synthesis. Allows virus growth in non-dividing cells, as well as reactivation from latency in infected hosts. Catalyzes the biosynthesis of deoxyribonucleotides from the corresponding ribonucleotides. The N-terminal region confers antiapoptotic activity in differentiated cells such as neurons and is important for viral reactivation to increase neural survivability. Prevents host necroptosis by targeting host RIPK1 and RIPK3, thereby hampering the formation of necroptotic RIPK1-RIPK3 complexes. May form hetero-amyloid structures with host proteins RIPK3 or ZBP1, thereby preventing RIPK3- and ZBP1-mediated necroptosis. In addition, inhibits extrinsic apoptosis by targeting host CASP8. The sequence is that of Ribonucleoside-diphosphate reductase large subunit from Homo sapiens (Human).